The primary structure comprises 155 residues: Small ribosomal subunit protein bS6 (155 aa).

Residues 94–155 form a disordered region; it reads EKHEEGPSAM…RPRRPREDRV (62 aa).

It belongs to the bacterial ribosomal protein bS6 family.

Its function is as follows. Binds together with bS18 to 16S ribosomal RNA. In Rhizobium leguminosarum bv. trifolii (strain WSM2304), this protein is Small ribosomal subunit protein bS6.